The sequence spans 359 residues: MRKIIHIDMDCYFAAVEMRDFPEYRGKPLAVGGSRVQRGVISTCNYEARKFGVRSAMATGYALKLCPDLILVPGRMQVYKEVSQQIRAIFSRYTELIEPLSLDEAYLDVSDCKLFKGSATLIAEAIRRDILAETGLTASAGVAPIKFLAKVASDLNKPNGQCVIPPDEVPEFVKSLSLRKIPGVGKVTAEKLSSLGLNTCADVQAYPKQELIARFGKFGAVLVERAHGIDDRGISVSRERKSVGVETTLAQDIYTLEQCQQVMPGLIQELSSRLGRSAKGRQIHKQVVKLKFNDFKQTTIEHRSDEVSVVMFYELLSQAMARQEGRGIRLLGVSVGLAESKDTLAPLMVRETKQLDFVF.

The 182-residue stretch at 4-185 (IIHIDMDCYF…LSLRKIPGVG (182 aa)) folds into the UmuC domain. Mg(2+)-binding residues include D8 and D103. E104 is an active-site residue.

This sequence belongs to the DNA polymerase type-Y family. In terms of assembly, monomer. The cofactor is Mg(2+).

The protein resides in the cytoplasm. It catalyses the reaction DNA(n) + a 2'-deoxyribonucleoside 5'-triphosphate = DNA(n+1) + diphosphate. Functionally, poorly processive, error-prone DNA polymerase involved in untargeted mutagenesis. Copies undamaged DNA at stalled replication forks, which arise in vivo from mismatched or misaligned primer ends. These misaligned primers can be extended by PolIV. Exhibits no 3'-5' exonuclease (proofreading) activity. May be involved in translesional synthesis, in conjunction with the beta clamp from PolIII. The polypeptide is DNA polymerase IV (Shewanella sp. (strain MR-7)).